Consider the following 237-residue polypeptide: Ribonuclease PH (237 aa).

Phosphate is bound by residues arginine 86 and 124–126 (GTR).

The protein belongs to the RNase PH family. As to quaternary structure, homohexameric ring arranged as a trimer of dimers.

It catalyses the reaction tRNA(n+1) + phosphate = tRNA(n) + a ribonucleoside 5'-diphosphate. Functionally, phosphorolytic 3'-5' exoribonuclease that plays an important role in tRNA 3'-end maturation. Removes nucleotide residues following the 3'-CCA terminus of tRNAs; can also add nucleotides to the ends of RNA molecules by using nucleoside diphosphates as substrates, but this may not be physiologically important. Probably plays a role in initiation of 16S rRNA degradation (leading to ribosome degradation) during starvation. In Shewanella piezotolerans (strain WP3 / JCM 13877), this protein is Ribonuclease PH.